The chain runs to 193 residues: Probable GTP-binding protein EngB (193 aa).

The EngB-type G domain maps to 19-188; it reads SVKEVCFMGR…HKQIFELFKA (170 aa). GTP-binding positions include 27–34, 53–57, 70–73, 136–139, and 167–169; these read GRSNVGKS, GRTQL, DLPG, NKFD, and VSA. The Mg(2+) site is built by Ser-34 and Thr-55.

This sequence belongs to the TRAFAC class TrmE-Era-EngA-EngB-Septin-like GTPase superfamily. EngB GTPase family. It depends on Mg(2+) as a cofactor.

Functionally, necessary for normal cell division and for the maintenance of normal septation. The protein is Probable GTP-binding protein EngB of Mycoplasma pneumoniae (strain ATCC 29342 / M129 / Subtype 1) (Mycoplasmoides pneumoniae).